The chain runs to 149 residues: Calmodulin (149 aa).

EF-hand domains are found at residues 8–43, 44–79, 81–116, and 117–149; these read EQIA…LGQN, PTEA…KMAD, DTEE…LGEK, and LSDE…MLSK. Residues Asp21, Asp23, Asp25, Asn27, Glu32, Asp57, Asp59, Asn61, Thr63, Glu68, Asp94, Asp96, Asn98, and Glu105 each coordinate Ca(2+). Lys116 carries the post-translational modification N6,N6,N6-trimethyllysine. 5 residues coordinate Ca(2+): Asp130, Asp132, Asp134, Gln136, and Glu141.

The protein belongs to the calmodulin family.

Its function is as follows. Calmodulin mediates the control of a large number of enzymes, ion channels and other proteins by Ca(2+). Among the enzymes to be stimulated by the calmodulin-Ca(2+) complex are a number of protein kinases and phosphatases. In Physarum polycephalum (Slime mold), this protein is Calmodulin.